The sequence spans 234 residues: Leucyl/phenylalanyl-tRNA--protein transferase (234 aa).

The protein belongs to the L/F-transferase family.

Its subcellular location is the cytoplasm. The enzyme catalyses N-terminal L-lysyl-[protein] + L-leucyl-tRNA(Leu) = N-terminal L-leucyl-L-lysyl-[protein] + tRNA(Leu) + H(+). The catalysed reaction is N-terminal L-arginyl-[protein] + L-leucyl-tRNA(Leu) = N-terminal L-leucyl-L-arginyl-[protein] + tRNA(Leu) + H(+). It catalyses the reaction L-phenylalanyl-tRNA(Phe) + an N-terminal L-alpha-aminoacyl-[protein] = an N-terminal L-phenylalanyl-L-alpha-aminoacyl-[protein] + tRNA(Phe). In terms of biological role, functions in the N-end rule pathway of protein degradation where it conjugates Leu, Phe and, less efficiently, Met from aminoacyl-tRNAs to the N-termini of proteins containing an N-terminal arginine or lysine. In Shigella boydii serotype 18 (strain CDC 3083-94 / BS512), this protein is Leucyl/phenylalanyl-tRNA--protein transferase.